Consider the following 312-residue polypeptide: Thioredoxin reductase (312 aa).

33–43 lines the FAD pocket; it reads EGFFSGIAGGQ. The cysteines at positions 138 and 141 are disulfide-linked. 283 to 292 serves as a coordination point for FAD; the sequence is DVQDKYYRQA.

The protein belongs to the class-II pyridine nucleotide-disulfide oxidoreductase family. As to quaternary structure, homodimer. FAD serves as cofactor.

The protein resides in the cytoplasm. The catalysed reaction is [thioredoxin]-dithiol + NADP(+) = [thioredoxin]-disulfide + NADPH + H(+). The protein is Thioredoxin reductase (trxB) of Chlamydia trachomatis serovar D (strain ATCC VR-885 / DSM 19411 / UW-3/Cx).